Here is a 489-residue protein sequence, read N- to C-terminus: 3-octaprenyl-4-hydroxybenzoate carboxy-lyase (489 aa).

Position 172 (N172) interacts with Mn(2+). Residues 175–177, 189–191, and 194–195 each bind prenylated FMN; these read IYR, RWL, and RG. Residue E238 participates in Mn(2+) binding. The active-site Proton donor is D287.

Belongs to the UbiD family. In terms of assembly, homohexamer. It depends on prenylated FMN as a cofactor. Mn(2+) is required as a cofactor.

The protein localises to the cell membrane. The catalysed reaction is a 4-hydroxy-3-(all-trans-polyprenyl)benzoate + H(+) = a 2-(all-trans-polyprenyl)phenol + CO2. Its pathway is cofactor biosynthesis; ubiquinone biosynthesis. Its function is as follows. Catalyzes the decarboxylation of 3-octaprenyl-4-hydroxy benzoate to 2-octaprenylphenol, an intermediate step in ubiquinone biosynthesis. In Salmonella arizonae (strain ATCC BAA-731 / CDC346-86 / RSK2980), this protein is 3-octaprenyl-4-hydroxybenzoate carboxy-lyase.